Consider the following 404-residue polypeptide: F-box protein At3g57590 (404 aa).

Residues 1–47 (MEPIPNDLILEIFSRLPAKSVIGFRTLSKHWASILRSPVFTELFLTR) form the F-box domain.

In Arabidopsis thaliana (Mouse-ear cress), this protein is F-box protein At3g57590.